The sequence spans 304 residues: Aspartate carbamoyltransferase catalytic subunit (304 aa).

Residues Arg-57 and Thr-58 each contribute to the carbamoyl phosphate site. Lys-86 contributes to the L-aspartate binding site. Residues Arg-107, His-135, and Gln-138 each contribute to the carbamoyl phosphate site. L-aspartate is bound by residues Arg-168 and Arg-229. Residues Leu-266 and Pro-267 each contribute to the carbamoyl phosphate site.

Belongs to the aspartate/ornithine carbamoyltransferase superfamily. ATCase family. In terms of assembly, heterooligomer of catalytic and regulatory chains.

The enzyme catalyses carbamoyl phosphate + L-aspartate = N-carbamoyl-L-aspartate + phosphate + H(+). It functions in the pathway pyrimidine metabolism; UMP biosynthesis via de novo pathway; (S)-dihydroorotate from bicarbonate: step 2/3. Catalyzes the condensation of carbamoyl phosphate and aspartate to form carbamoyl aspartate and inorganic phosphate, the committed step in the de novo pyrimidine nucleotide biosynthesis pathway. The protein is Aspartate carbamoyltransferase catalytic subunit of Methanosphaera stadtmanae (strain ATCC 43021 / DSM 3091 / JCM 11832 / MCB-3).